The following is a 785-amino-acid chain: Conserved oligomeric Golgi complex subunit 4 (785 aa).

The interval 1-24 (MADLDSPPKLSGVQQPSEGVGGGR) is disordered. Residue alanine 2 is modified to N-acetylalanine. Residues 2-84 (ADLDSPPKLS…VTLHRMGPNL (83 aa)) form an interaction with SCFD1 region. Serine 6 bears the Phosphoserine mark. The interaction with STX5 stretch occupies residues 85-153 (QLIEGDAKQL…TALRSEDYEQ (69 aa)). A d domain region spans residues 618–740 (PQVQPWINSF…SQMATILNLE (123 aa)). The e domain; essential for proper cell surface glycosylation stretch occupies residues 741 to 785 (RVTEILDYWGPNSGPLTWRLTPAEVRQVLALRIDFRSEDIKRLRL).

Belongs to the COG4 family. Monomer. Component of the conserved oligomeric Golgi (COG) complex which is composed of eight different subunits and is required for normal Golgi morphology and localization. Mediates interaction of SCFD1 with the COG complex. Interacts with STX5.

It localises to the cytoplasm. The protein localises to the cytosol. Its subcellular location is the golgi apparatus membrane. Required for normal Golgi function. Plays a role in SNARE-pin assembly and Golgi-to-ER retrograde transport via its interaction with SCFD1. The polypeptide is Conserved oligomeric Golgi complex subunit 4 (COG4) (Homo sapiens (Human)).